The chain runs to 257 residues: Adenylate kinase (257 aa).

52–57 (GAGKGT) is an ATP binding site. The segment at 72-101 (ATGDMLRSQVAKKTELGKEAKKIMDQGGLV) is NMP. AMP-binding positions include Thr-73, Arg-78, 99–101 (GLV), 128–131 (GFPR), and Gln-135. Positions 169 to 206 (GRLVHPASGRSYHKIFNPPKNDMKDDVTGEPLIQRSDD) are LID. ATP contacts are provided by residues Arg-170 and 179–180 (SY). AMP contacts are provided by Arg-203 and Arg-214. An ATP-binding site is contributed by Gln-242.

It belongs to the adenylate kinase family. AK2 subfamily. In terms of assembly, monomer.

It localises to the cytoplasm. The protein resides in the cytosol. Its subcellular location is the mitochondrion intermembrane space. The enzyme catalyses AMP + ATP = 2 ADP. Functionally, catalyzes the reversible transfer of the terminal phosphate group between ATP and AMP. Plays an important role in cellular energy homeostasis and in adenine nucleotide metabolism. Adenylate kinase activity is critical for regulation of the phosphate utilization and the AMP de novo biosynthesis pathways. This chain is Adenylate kinase (adk1), found in Neosartorya fischeri (strain ATCC 1020 / DSM 3700 / CBS 544.65 / FGSC A1164 / JCM 1740 / NRRL 181 / WB 181) (Aspergillus fischerianus).